Reading from the N-terminus, the 338-residue chain is Holliday junction branch migration complex subunit RuvB (338 aa).

Positions Met-1–Tyr-180 are large ATPase domain (RuvB-L). ATP contacts are provided by Leu-19, Arg-20, Gly-61, Lys-64, Thr-65, Thr-66, Arg-170, Tyr-180, and Arg-217. Thr-65 serves as a coordination point for Mg(2+). The interval Thr-181–Glu-251 is small ATPAse domain (RuvB-S). The segment at Glu-254–Arg-338 is head domain (RuvB-H). DNA-binding residues include Lys-309 and Arg-314.

Belongs to the RuvB family. As to quaternary structure, homohexamer. Forms an RuvA(8)-RuvB(12)-Holliday junction (HJ) complex. HJ DNA is sandwiched between 2 RuvA tetramers; dsDNA enters through RuvA and exits via RuvB. An RuvB hexamer assembles on each DNA strand where it exits the tetramer. Each RuvB hexamer is contacted by two RuvA subunits (via domain III) on 2 adjacent RuvB subunits; this complex drives branch migration. In the full resolvosome a probable DNA-RuvA(4)-RuvB(12)-RuvC(2) complex forms which resolves the HJ.

Its subcellular location is the cytoplasm. The enzyme catalyses ATP + H2O = ADP + phosphate + H(+). Its function is as follows. The RuvA-RuvB-RuvC complex processes Holliday junction (HJ) DNA during genetic recombination and DNA repair, while the RuvA-RuvB complex plays an important role in the rescue of blocked DNA replication forks via replication fork reversal (RFR). RuvA specifically binds to HJ cruciform DNA, conferring on it an open structure. The RuvB hexamer acts as an ATP-dependent pump, pulling dsDNA into and through the RuvAB complex. RuvB forms 2 homohexamers on either side of HJ DNA bound by 1 or 2 RuvA tetramers; 4 subunits per hexamer contact DNA at a time. Coordinated motions by a converter formed by DNA-disengaged RuvB subunits stimulates ATP hydrolysis and nucleotide exchange. Immobilization of the converter enables RuvB to convert the ATP-contained energy into a lever motion, pulling 2 nucleotides of DNA out of the RuvA tetramer per ATP hydrolyzed, thus driving DNA branch migration. The RuvB motors rotate together with the DNA substrate, which together with the progressing nucleotide cycle form the mechanistic basis for DNA recombination by continuous HJ branch migration. Branch migration allows RuvC to scan DNA until it finds its consensus sequence, where it cleaves and resolves cruciform DNA. In Caldicellulosiruptor saccharolyticus (strain ATCC 43494 / DSM 8903 / Tp8T 6331), this protein is Holliday junction branch migration complex subunit RuvB.